The chain runs to 423 residues: Lysosomal acid phosphatase (423 aa).

The N-terminal stretch at 1 to 30 (MAGRQSGWSQAALLQFLLGMCLMVMPPIQA) is a signal peptide. The Lumenal portion of the chain corresponds to 31–380 (RSLRFVTLLY…QLASDTADTE (350 aa)). His-42 functions as the Nucleophile in the catalytic mechanism. 7 N-linked (GlcNAc...) asparagine glycosylation sites follow: Asn-92, Asn-133, Asn-167, Asn-177, Asn-191, Asn-197, and Asn-267. 3 cysteine pairs are disulfide-bonded: Cys-159–Cys-370, Cys-212–Cys-310, and Cys-345–Cys-349. Asp-287 serves as the catalytic Proton donor. N-linked (GlcNAc...) asparagine glycans are attached at residues Asn-322 and Asn-331. The helical transmembrane segment at 381-401 (VIVALAVCGSILFLLIVLLLT) threads the bilayer. The Cytoplasmic segment spans residues 402-423 (VLFRMQAQPPGYHHVADREDHA).

Belongs to the histidine acid phosphatase family. In terms of processing, the membrane-bound form is converted to the soluble form by sequential proteolytic processing. First, the C-terminal cytoplasmic tail is removed. Cleavage by a lysosomal protease releases the soluble form in the lysosome lumen.

The protein resides in the lysosome membrane. It localises to the lysosome lumen. The catalysed reaction is a phosphate monoester + H2O = an alcohol + phosphate. This is Lysosomal acid phosphatase (Acp2) from Rattus norvegicus (Rat).